Reading from the N-terminus, the 644-residue chain is DNA mismatch repair protein MutL (644 aa).

Positions 363–405 (GTFNPFTDDKTNQHYTKAGSGSGSGYSSGSSSSSGSGSGSSYS) are disordered. Low complexity predominate over residues 389-405 (SSGSSSSSGSGSGSSYS).

This sequence belongs to the DNA mismatch repair MutL/HexB family.

Functionally, this protein is involved in the repair of mismatches in DNA. It is required for dam-dependent methyl-directed DNA mismatch repair. May act as a 'molecular matchmaker', a protein that promotes the formation of a stable complex between two or more DNA-binding proteins in an ATP-dependent manner without itself being part of a final effector complex. In Flavobacterium johnsoniae (strain ATCC 17061 / DSM 2064 / JCM 8514 / BCRC 14874 / CCUG 350202 / NBRC 14942 / NCIMB 11054 / UW101) (Cytophaga johnsonae), this protein is DNA mismatch repair protein MutL.